A 390-amino-acid chain; its full sequence is Phosphopentomutase (390 aa).

6 residues coordinate Mn(2+): Asp-11, Asp-283, His-288, Asp-324, His-325, and His-336.

It belongs to the phosphopentomutase family. Requires Mn(2+) as cofactor.

The protein resides in the cytoplasm. The enzyme catalyses 2-deoxy-alpha-D-ribose 1-phosphate = 2-deoxy-D-ribose 5-phosphate. The catalysed reaction is alpha-D-ribose 1-phosphate = D-ribose 5-phosphate. Its pathway is carbohydrate degradation; 2-deoxy-D-ribose 1-phosphate degradation; D-glyceraldehyde 3-phosphate and acetaldehyde from 2-deoxy-alpha-D-ribose 1-phosphate: step 1/2. Its function is as follows. Isomerase that catalyzes the conversion of deoxy-ribose 1-phosphate (dRib-1-P) and ribose 1-phosphate (Rib-1-P) to deoxy-ribose 5-phosphate (dRib-5-P) and ribose 5-phosphate (Rib-5-P), respectively. The sequence is that of Phosphopentomutase from Clostridium acetobutylicum (strain ATCC 824 / DSM 792 / JCM 1419 / IAM 19013 / LMG 5710 / NBRC 13948 / NRRL B-527 / VKM B-1787 / 2291 / W).